Reading from the N-terminus, the 232-residue chain is MSVTGPQLLVAMDFNDINDCLALACQLDPQSCRLKIGKELFTTAGPAVVESVQKLGFDVFLDLKFHDIPNTVAGAVKAAANMGVWMVNVHASGGQRMMEAARESLVLFSHKPLLIAVTVLTSMDQSDLNGIGITESPEAMVARLASLAKLSGMDGVVCSALEAGAMKVQQGADFLTITPGIRPASTEAGDQRRVVTPEQAIANGSDFIVVGRPITQAEDPAAACAQIVNSIQ.

Substrate-binding positions include D13, K35, 62 to 71, T121, R182, Q191, G211, and R212; that span reads DLKFHDIPNT. The active-site Proton donor is the K64.

Belongs to the OMP decarboxylase family. Type 1 subfamily. In terms of assembly, homodimer.

The enzyme catalyses orotidine 5'-phosphate + H(+) = UMP + CO2. Its pathway is pyrimidine metabolism; UMP biosynthesis via de novo pathway; UMP from orotate: step 2/2. Catalyzes the decarboxylation of orotidine 5'-monophosphate (OMP) to uridine 5'-monophosphate (UMP). In Teredinibacter turnerae (strain ATCC 39867 / T7901), this protein is Orotidine 5'-phosphate decarboxylase.